The chain runs to 176 residues: Large ribosomal subunit protein uL6 (176 aa).

Belongs to the universal ribosomal protein uL6 family. Part of the 50S ribosomal subunit.

This protein binds to the 23S rRNA, and is important in its secondary structure. It is located near the subunit interface in the base of the L7/L12 stalk, and near the tRNA binding site of the peptidyltransferase center. This Methanothrix thermoacetophila (strain DSM 6194 / JCM 14653 / NBRC 101360 / PT) (Methanosaeta thermophila) protein is Large ribosomal subunit protein uL6.